Here is a 274-residue protein sequence, read N- to C-terminus: Large ribosomal subunit protein uL2cz/uL2cy (274 aa).

A disordered region spans residues 224 to 274 (NPVDHPHGGGEGRAPIGRKKPTTPWGYPALGRRSRKRNKYSDNLILRRRSK).

The protein belongs to the universal ribosomal protein uL2 family. As to quaternary structure, part of the 50S ribosomal subunit.

The protein resides in the plastid. The protein localises to the chloroplast. The protein is Large ribosomal subunit protein uL2cz/uL2cy (rpl2-A) of Panax ginseng (Korean ginseng).